The chain runs to 594 residues: MNADFLGLLLLYLAILLCAAPLLGRHIRQAMNGERTWLTAWGQPLERGLYRLAGVDPAAEMDWRRYAVAMLVFNVLGVLAVYALQRLQGWLPLNPAGLPGVAPDSALNTAISFVTNTNWQGYAGESTMSYLTQMLALTVQNFVSAATGIAVLIALVRGLARHSAATLGNFWADLVRATLYVLLPLSFILALALVSQGVVQNLDPYVEAQTVQAQQYETARLDAQGQPMTGPAGQPLTDTVVTRVQNLPMGPVASQEAIKLLGTNGGGFFNANSAHPYENPNAWSNLLEMLAILLIPAALCWTFGEMVGSRRQGVAILAAMTVLFAGFSASAAYFEQQPTPALRQAEAALLADGGNLEGKEARFGVAATALFATVTTAASCGAVNGMHDSFSALGGVTPLLQMQLGEVIYGGVGSGLYGMLAFAILAVFIAGLMIGRTPEYLGKKIEALDMQMVALVILATPALVLAGTAVAVLADAGRAGVLNPGAHGFSEILYAMSSAANNNGSAFAGLSANTPFYNVLLGLAMWFGRYTIIVAILALAGSLAAKPRLPASVGGMPTTGPLFVALLVGAVLLVGALTYVPALALGPVAEHLQP.

10 helical membrane-spanning segments follow: residues 3–23 (ADFL…APLL), 67–87 (AVAM…LQRL), 136–156 (ALTV…IALV), 179–199 (LYVL…QGVV), 287–307 (LEML…GEMV), 314–334 (VAIL…AAYF), 415–435 (GLYG…LMIG), 453–473 (VALV…VAVL), 519–539 (VLLG…ILAL), and 562–582 (LFVA…YVPA).

Belongs to the KdpA family. In terms of assembly, the system is composed of three essential subunits: KdpA, KdpB and KdpC.

The protein resides in the cell inner membrane. Part of the high-affinity ATP-driven potassium transport (or Kdp) system, which catalyzes the hydrolysis of ATP coupled with the electrogenic transport of potassium into the cytoplasm. This subunit binds the periplasmic potassium ions and delivers the ions to the membrane domain of KdpB through an intramembrane tunnel. This Bordetella bronchiseptica (strain ATCC BAA-588 / NCTC 13252 / RB50) (Alcaligenes bronchisepticus) protein is Potassium-transporting ATPase potassium-binding subunit.